The chain runs to 284 residues: Polyamine aminopropyltransferase (284 aa).

A PABS domain is found at 2 to 237 (ELWYTEKHTE…GHWLFGFASK (236 aa)). Q31 contributes to the S-methyl-5'-thioadenosine binding site. Spermidine-binding residues include H62 and D86. S-methyl-5'-thioadenosine contacts are provided by residues E106 and 137–138 (DG). D155 serves as the catalytic Proton acceptor. 155 to 158 (DSTD) contacts spermidine. Residue P162 participates in S-methyl-5'-thioadenosine binding.

It belongs to the spermidine/spermine synthase family. In terms of assembly, homodimer or homotetramer.

It is found in the cytoplasm. The catalysed reaction is S-adenosyl 3-(methylsulfanyl)propylamine + putrescine = S-methyl-5'-thioadenosine + spermidine + H(+). It functions in the pathway amine and polyamine biosynthesis; spermidine biosynthesis; spermidine from putrescine: step 1/1. Its function is as follows. Catalyzes the irreversible transfer of a propylamine group from the amino donor S-adenosylmethioninamine (decarboxy-AdoMet) to putrescine (1,4-diaminobutane) to yield spermidine. The polypeptide is Polyamine aminopropyltransferase (Clostridium botulinum (strain Eklund 17B / Type B)).